Reading from the N-terminus, the 361-residue chain is D-alanine--D-alanine ligase (361 aa).

An ATP-grasp domain is found at 134-344 (KLLLKSFNIP…FKDLIDNLID (211 aa)). 167–222 (KEVLGYPVIVKPAVLGSSIGINVAYSENQIESCIEEALKYDLTIVIEKFIEAREIE) serves as a coordination point for ATP. Asp-297, Glu-311, and Asn-313 together coordinate Mg(2+).

It belongs to the D-alanine--D-alanine ligase family. It depends on Mg(2+) as a cofactor. The cofactor is Mn(2+).

Its subcellular location is the cytoplasm. It catalyses the reaction 2 D-alanine + ATP = D-alanyl-D-alanine + ADP + phosphate + H(+). The protein operates within cell wall biogenesis; peptidoglycan biosynthesis. Its function is as follows. Cell wall formation. The protein is D-alanine--D-alanine ligase of Borreliella afzelii (strain PKo) (Borrelia afzelii).